The chain runs to 705 residues: Elongation factor G (705 aa).

The tr-type G domain occupies 8-289 (VNYRNIGISA…TVINYLPSPK (282 aa)). GTP contacts are provided by residues 17–24 (AHIDAGKT), 88–92 (DTPGH), and 142–145 (NKMD).

The protein belongs to the TRAFAC class translation factor GTPase superfamily. Classic translation factor GTPase family. EF-G/EF-2 subfamily.

The protein resides in the cytoplasm. In terms of biological role, catalyzes the GTP-dependent ribosomal translocation step during translation elongation. During this step, the ribosome changes from the pre-translocational (PRE) to the post-translocational (POST) state as the newly formed A-site-bound peptidyl-tRNA and P-site-bound deacylated tRNA move to the P and E sites, respectively. Catalyzes the coordinated movement of the two tRNA molecules, the mRNA and conformational changes in the ribosome. The polypeptide is Elongation factor G (Wigglesworthia glossinidia brevipalpis).